Reading from the N-terminus, the 739-residue chain is Alcohol dehydrogenase (quinone), dehydrogenase subunit (739 aa).

The N-terminal stretch at 1–35 (MISAVFGKRRSLSRTLTAGTICAALISGYATMASA) is a signal peptide. E97 is a pyrroloquinoline quinone binding site. The cysteines at positions 143 and 144 are disulfide-linked. Position 149 (R149) interacts with pyrroloquinoline quinone. Residue E217 participates in Ca(2+) binding. T279 contributes to the pyrroloquinoline quinone binding site. Ca(2+) contacts are provided by N299 and D344. D344 acts as the Proton acceptor in catalysis. 2 residues coordinate pyrroloquinoline quinone: K371 and I585. The region spanning 635-739 (FDSKRTDNGY…NADGIPEQLP (105 aa)) is the Cytochrome c domain. C651, C654, H655, and M694 together coordinate heme c.

This sequence belongs to the bacterial PQQ dehydrogenase family. The alcohol dehydrogenase multicomponent enzyme system is composed of a dehydrogenase subunit I (AdhA) and a cytochrome c subunit II (AdhB). The cofactor is pyrroloquinoline quinone. Requires Ca(2+) as cofactor. It depends on heme c as a cofactor.

The protein localises to the cell membrane. The catalysed reaction is ethanol + a ubiquinone = a ubiquinol + acetaldehyde. Dehydrogenase component of the alcohol dehydrogenase multicomponent enzyme system which is involved in the production of acetic acid and in the ethanol oxidase respiratory chain. Quinohemoprotein alcohol dehydrogenase (ADH) catalyzes the oxidation of ethanol to acetaldehyde by transferring electrons to the ubiquinone embedded in the membrane phospholipids. The electrons transfer from ethanol to membranous ubiquinone occurs from pyrroloquinoline quinone (PQQ) to one heme c in subunit I (AdhA), and finally to two heme c in subunit II (AdhB). Besides ubiquinone reduction, ADH also has a ubiquinol (QH2) oxidation reaction which mediates electron transfer from ubiquinol to the non-energy generating bypass oxidase system. The electrons transfer occurs from ubiquinol (QH2) to the additional heme c within subunit II (AdhB). This Komagataeibacter europaeus (Gluconacetobacter europaeus) protein is Alcohol dehydrogenase (quinone), dehydrogenase subunit.